A 62-amino-acid chain; its full sequence is Small ribosomal subunit protein eS17 (62 aa).

It belongs to the eukaryotic ribosomal protein eS17 family.

The chain is Small ribosomal subunit protein eS17 from Methanocaldococcus jannaschii (strain ATCC 43067 / DSM 2661 / JAL-1 / JCM 10045 / NBRC 100440) (Methanococcus jannaschii).